Reading from the N-terminus, the 187-residue chain is UPF0301 protein LPC_2717 (187 aa).

It belongs to the UPF0301 (AlgH) family.

The protein is UPF0301 protein LPC_2717 of Legionella pneumophila (strain Corby).